Reading from the N-terminus, the 447-residue chain is Clusterin (447 aa).

Positions 1 to 21 are cleaved as a signal peptide; sequence MKILLLCVALLLTWDNGMVLG. A Nuclear localization signal motif is present at residues 77–80; that stretch reads KKKK. 5 cysteine pairs are disulfide-bonded: Cys-101/Cys-312, Cys-112/Cys-304, Cys-115/Cys-301, Cys-120/Cys-294, and Cys-128/Cys-284. An N-linked (GlcNAc...) asparagine glycan is attached at Asn-102. Ser-132 is modified (phosphoserine). Residues Asn-144, Asn-290, Asn-327, Asn-353, and Asn-373 are each glycosylated (N-linked (GlcNAc...) asparagine). Position 394 is a phosphoserine (Ser-394). The Nuclear localization signal signature appears at 441-445; the sequence is RRKSR.

It belongs to the clusterin family. As to quaternary structure, antiparallel disulfide-linked heterodimer of an alpha chain and a beta chain. Self-associates and forms higher oligomers. Interacts with a broad range of misfolded proteins, including APP, APOC2 and LYZ. Slightly acidic pH promotes interaction with misfolded proteins. Forms high-molecular weight oligomers upon interaction with misfolded proteins. Interacts with APOA1, LRP2, CLUAP1 and PON1. Interacts with the complement membrane attack complex. Interacts (via alpha chain) with XRCC6. Interacts with SYVN1, COMMD1, BTRC, CUL1 and with ubiquitin and SCF (SKP1-CUL1-F-box protein) E3 ubiquitin-protein ligase complexes. Interacts (via alpha chain) with BAX in stressed cells, where BAX undergoes a conformation change leading to association with the mitochondrial membrane. Does not interact with BAX in unstressed cells. Found in a complex with LTF, CLU, EPPIN and SEMG1. Interacts (immaturely glycosylated pre-secreted form) with HSPA5; this interaction promotes CLU stability and facilitates stress-induced CLU retrotranslocation from the secretory pathway to the mitochondria, thereby reducing stress-induced apoptosis by stabilizing mitochondrial membrane integrity. Interacts with BCL2L1; this interaction releases and activates BAX and promotes cell death. Interacts with TGFBR2 and ACVR1. Interacts (secreted form) with STMN3; this interaction may act as an important modulator during neuronal differentiation. Interacts with VLDLR and LRP8. Proteolytically cleaved on its way through the secretory system, probably within the Golgi lumen. Proteolytic cleavage is not necessary for its chaperone activity. All non-secreted forms are not proteolytically cleaved. Chaperone activity of uncleaved forms is dependent on a non-reducing environment. In terms of processing, polyubiquitinated, leading to proteasomal degradation. Under cellular stress, the intracellular level of cleaved form is reduced due to proteasomal degradation. Post-translationally, extensively glycosylated with sulfated N-linked carbohydrates. About 30% of the protein mass is comprised of complex N-linked carbohydrate. Endoplasmic reticulum (ER) stress induces changes in glycosylation status and increases level of hypoglycosylated forms. Core carbohydrates are essential for chaperone activity. Non-secreted forms are hypoglycosylated or unglycosylated. In terms of tissue distribution, detected in Sertoli cells (at protein level). Detected in cultured Sertoli cells, testis, epididymis, liver and brain.

The protein resides in the secreted. The protein localises to the nucleus. It localises to the cytoplasm. It is found in the mitochondrion membrane. Its subcellular location is the cytosol. The protein resides in the microsome. The protein localises to the endoplasmic reticulum. It localises to the mitochondrion. It is found in the perinuclear region. Its subcellular location is the cytoplasmic vesicle. The protein resides in the secretory vesicle. The protein localises to the chromaffin granule. In terms of biological role, functions as extracellular chaperone that prevents aggregation of non native proteins. Prevents stress-induced aggregation of blood plasma proteins. Inhibits formation of amyloid fibrils by APP, APOC2, B2M, CALCA, CSN3, SNCA and aggregation-prone LYZ variants (in vitro). Does not require ATP. Maintains partially unfolded proteins in a state appropriate for subsequent refolding by other chaperones, such as HSPA8/HSC70. Does not refold proteins by itself. Binding to cell surface receptors triggers internalization of the chaperone-client complex and subsequent lysosomal or proteasomal degradation. When secreted, protects cells against apoptosis and against cytolysis by complement: inhibits assembly of the complement membrane attack complex (MAC) by preventing polymerization of C9 pore component of the MAC complex. Intracellular forms interact with ubiquitin and SCF (SKP1-CUL1-F-box protein) E3 ubiquitin-protein ligase complexes and promote the ubiquitination and subsequent proteasomal degradation of target proteins. Promotes proteasomal degradation of COMMD1 and IKBKB. Modulates NF-kappa-B transcriptional activity. Following stress, promotes apoptosis. Inhibits apoptosis when associated with the mitochondrial membrane by interference with BAX-dependent release of cytochrome c into the cytoplasm. Plays a role in the regulation of cell proliferation. An intracellular form suppresses stress-induced apoptosis by stabilizing mitochondrial membrane integrity through interaction with HSPA5. Secreted form does not affect caspase or BAX-mediated intrinsic apoptosis and TNF-induced NF-kappa-B-activity. Secreted form act as an important modulator during neuronal differentiation through interaction with STMN3. Plays a role in the clearance of immune complexes that arise during cell injury. The sequence is that of Clusterin from Rattus norvegicus (Rat).